The following is a 526-amino-acid chain: Vang-like protein 1 (526 aa).

A compositionally biased stretch (low complexity) spans 1–15 (MDTESTYSGYSYYSS). The segment at 1 to 87 (MDTESTYSGY…TTAITGTSEH (87 aa)) is disordered. The Cytoplasmic segment spans residues 1 to 114 (MDTESTYSGY…VGLDCKRYLG (114 aa)). Residues 75–87 (GETTTAITGTSEH) are compositionally biased toward polar residues. Phosphoserine occurs at positions 88 and 90. Residues 115–135 (LTVASFLGLLVFLTPIAFILL) traverse the membrane as a helical segment. At 136–153 (PQILWREELKPCGAICEG) the chain is on the extracellular side. The chain crosses the membrane as a helical span at residues 154-174 (LLISVSFKLLILLIGTWALFF). Residues 175 to 184 (RKQRADVPRV) are Cytoplasmic-facing. The helical transmembrane segment at 185-205 (FVFRALLLVLIFLFVVSYWLF) threads the bilayer. Topologically, residues 206 to 224 (YGVRILDSRDQNYKDIVQY) are extracellular. Residues 225 to 245 (AVSLVDALLFIHYLAIVLLEL) traverse the membrane as a helical segment. The Cytoplasmic segment spans residues 246–526 (RQLQPMFTLQ…VLRLQSETSV (281 aa)).

It belongs to the Vang family. In terms of assembly, heterodimer with Vangl2. Interacts through its C-terminal region with the N-terminal half of DVL1, DVL2 and DVL3. The PDZ domain of DVL1, DVL2 and DVL3 is required for the interaction.

It is found in the cell membrane. The polypeptide is Vang-like protein 1 (Vangl1) (Mus musculus (Mouse)).